Consider the following 197-residue polypeptide: Secreted RxLR effector protein 48 (197 aa).

Residues 1-27 (MCCVSWNWVLACTFLLIFLSWWNCCND) form the signal peptide. The RxLR-dEER motif lies at 58–79 (RLLRVNLAANAEVLTHEIEEEK).

This sequence belongs to the RxLR effector family.

The protein resides in the secreted. It localises to the host nucleus. It is found in the host cytoplasm. In terms of biological role, secreted effector that completely suppresses the host cell death induced by cell death-inducing proteins. This is Secreted RxLR effector protein 48 from Plasmopara viticola (Downy mildew of grapevine).